Consider the following 195-residue polypeptide: Probable chorismate pyruvate-lyase (195 aa).

Residues R79, L117, and E180 each coordinate substrate.

The protein belongs to the UbiC family.

It is found in the cytoplasm. The enzyme catalyses chorismate = 4-hydroxybenzoate + pyruvate. It participates in cofactor biosynthesis; ubiquinone biosynthesis. Functionally, removes the pyruvyl group from chorismate, with concomitant aromatization of the ring, to provide 4-hydroxybenzoate (4HB) for the ubiquinone pathway. The sequence is that of Probable chorismate pyruvate-lyase from Ralstonia nicotianae (strain ATCC BAA-1114 / GMI1000) (Ralstonia solanacearum).